We begin with the raw amino-acid sequence, 126 residues long: Holo-[acyl-carrier-protein] synthase (126 aa).

Mg(2+)-binding residues include Asp-8 and Glu-59.

It belongs to the P-Pant transferase superfamily. AcpS family. Mg(2+) serves as cofactor.

The protein localises to the cytoplasm. It carries out the reaction apo-[ACP] + CoA = holo-[ACP] + adenosine 3',5'-bisphosphate + H(+). In terms of biological role, transfers the 4'-phosphopantetheine moiety from coenzyme A to a Ser of acyl-carrier-protein. This Rickettsia akari (strain Hartford) protein is Holo-[acyl-carrier-protein] synthase.